Here is a 206-residue protein sequence, read N- to C-terminus: Large ribosomal subunit protein eL13x (206 aa).

The disordered stretch occupies residues 186–206 (NARHAGARAKRAAEAEKEEKK). Residues 196–206 (RAAEAEKEEKK) are compositionally biased toward basic and acidic residues.

Belongs to the eukaryotic ribosomal protein eL13 family.

This is Large ribosomal subunit protein eL13x (RPL13D) from Arabidopsis thaliana (Mouse-ear cress).